Here is a 414-residue protein sequence, read N- to C-terminus: Putative cytochrome P450 126 (414 aa).

Cysteine 363 contributes to the heme binding site.

This sequence belongs to the cytochrome P450 family. Heme serves as cofactor.

The protein is Putative cytochrome P450 126 (cyp126) of Mycobacterium tuberculosis (strain CDC 1551 / Oshkosh).